A 301-amino-acid polypeptide reads, in one-letter code: L-threonate dehydrogenase (301 aa).

NAD(+)-binding positions include 6–34 and Thr101; that span reads YSVAVIGLGSMGMGAAVSCINAGLTTYGI. The active site involves Lys177. Lys245 contributes to the NAD(+) binding site.

The protein belongs to the HIBADH-related family. L-threonate dehydrogenase subfamily.

The enzyme catalyses L-threonate + NAD(+) = 2-dehydro-L-erythronate + NADH + H(+). In terms of biological role, catalyzes oxidation of L-threonate to 2-oxo-tetronate. Can use either NAD(+) or NADP(+) as cosubstrate, with a preference for NAD(+). The polypeptide is L-threonate dehydrogenase (Haemophilus influenzae (strain ATCC 51907 / DSM 11121 / KW20 / Rd)).